The following is a 486-amino-acid chain: Aspartyl/glutamyl-tRNA(Asn/Gln) amidotransferase subunit B (486 aa).

It belongs to the GatB/GatE family. GatB subfamily. In terms of assembly, heterotrimer of A, B and C subunits.

The catalysed reaction is L-glutamyl-tRNA(Gln) + L-glutamine + ATP + H2O = L-glutaminyl-tRNA(Gln) + L-glutamate + ADP + phosphate + H(+). It catalyses the reaction L-aspartyl-tRNA(Asn) + L-glutamine + ATP + H2O = L-asparaginyl-tRNA(Asn) + L-glutamate + ADP + phosphate + 2 H(+). Allows the formation of correctly charged Asn-tRNA(Asn) or Gln-tRNA(Gln) through the transamidation of misacylated Asp-tRNA(Asn) or Glu-tRNA(Gln) in organisms which lack either or both of asparaginyl-tRNA or glutaminyl-tRNA synthetases. The reaction takes place in the presence of glutamine and ATP through an activated phospho-Asp-tRNA(Asn) or phospho-Glu-tRNA(Gln). This is Aspartyl/glutamyl-tRNA(Asn/Gln) amidotransferase subunit B from Leptospira borgpetersenii serovar Hardjo-bovis (strain L550).